The following is a 621-amino-acid chain: Phytoene desaturase (621 aa).

Positions 1–23 (MPSTSKRPTAIVIGSGVGGVSTA) are cleaved as a signal peptide. Residues 394–425 (HASQAHQLSASRNGHISSASPPDQPGLTPTEK) are disordered. Residues 397-414 (QAHQLSASRNGHISSASP) are compositionally biased toward polar residues. Residues 598-618 (WEQWVSVLIYLLVGIFAWLWM) form a helical membrane-spanning segment.

This sequence belongs to the carotenoid/retinoid oxidoreductase family. The cofactor is NAD(+).

It is found in the membrane. It carries out the reaction 15-cis-phytoene + 5 A = all-trans-3,4-didehydrolycopene + 5 AH2. It participates in carotenoid biosynthesis; lycopene biosynthesis. Phytoene desaturase involved in the carotenoid biosynthesis pathway. Converts phytoene into 3,4-didehydrolycopene via the intermediary of phytofluene, zeta-carotene, neurosporene and lycopene, by introducing up to five double bonds into phytoene. This chain is Phytoene desaturase (PDH1), found in Cercospora nicotianae (Barn spot disease fungus).